A 388-amino-acid chain; its full sequence is P2X purinoceptor 4 (388 aa).

Residues M1–R33 lie on the Cytoplasmic side of the membrane. A helical membrane pass occupies residues V34–Y54. Over Q55 to N338 the chain is Extracellular. ATP is bound by residues K67 and K69. 2 residues coordinate CTP: K67 and K69. N75, N110, N131, N153, and N184 each carry an N-linked (GlcNAc...) asparagine glycan. Disulfide bonds link C116/C165, C126/C149, and C132/C159. T186 and L188 together coordinate ATP. Residue T186 coordinates CTP. N-linked (GlcNAc...) asparagine glycans are attached at residues N199 and N208. 2 disulfides stabilise this stretch: C217/C227 and C261/C270. N293, R295, and K313 together coordinate ATP. CTP contacts are provided by N293, R295, and K313. Residues V339–Y359 form a helical membrane-spanning segment. Residues C360–Q388 lie on the Cytoplasmic side of the membrane.

It belongs to the P2X receptor family. As to quaternary structure, functional P2RXs are organized as homomeric and heteromeric trimers. Functional P2XRs are organized as homomeric and heteromeric trimers. Forms heterotrimer with P2RX1. Interacts with P2RX7 (via C-terminus); this interaction is functional only in the presence of ATP. Forms heterotrimer with P2RX4; functional differences between homomeric P2RX4 and P2RX4/6 heterotrimer are minor. Interacts with AP1M2.

The protein localises to the cell membrane. It is found in the lysosome membrane. The catalysed reaction is K(+)(in) = K(+)(out). It carries out the reaction Na(+)(in) = Na(+)(out). The enzyme catalyses Ca(2+)(in) = Ca(2+)(out). Activated by ATP. pH-dependent and inhibited by acidic pH. Functionally, ATP-gated nonselective transmembrane cation channel permeable to potassium, sodium and calcium. CTP, but not GTP or UTP, functions as a weak affinity agonist for P2RX4. Activated by extracellularly released ATP, it plays multiple role in immunity and central nervous system physiology. Plays a key role in initial steps of T-cell activation and Ca(2+) microdomain formation. Also participates in basal T-cell activity without TCR/CD3 stimulation. Promotes the differentiation and activation of Th17 cells via expression of retinoic acid-related orphan receptor C/RORC. Upon activation, drives microglia motility via the PI3K/Akt pathway. Could also function as an ATP-gated cation channel of lysosomal membranes. This Mus musculus (Mouse) protein is P2X purinoceptor 4 (P2rx4).